We begin with the raw amino-acid sequence, 377 residues long: MIETNKKASWSELCPDVLRCVFELLSFSDLNRTRSVCSSWHSASRHCVPTQNQIPWLILFPRNNVNNNNNNSCVLFVPDDRDSLYKTKDLGVGFMLSNCLATYGSWILMMDRLCNLNILNPLTGEKIDLPRTKFDLPRLESSVACLWIDEKTKDYIVVWKIKNSLVYAKKGNHTWQQVFSMNEELSVEQIVYEHKTQKLYVHFNDSTLSIWRLSREDPHGVFENYIPFDFVFQDFLPDRRTDEELYVKEYIDTRLNIALTTSGELLKVASVVQKSKRWLFRIYKMNYIKRRWERIESLGDEALILDMGITIVAKDIPGLKRNSIYISGFDYGRKHLDHIFIFDLTTQESEPLPYCVSSSNDFSDARWFFPSFSQSPY.

The region spanning 8–55 (ASWSELCPDVLRCVFELLSFSDLNRTRSVCSSWHSASRHCVPTQNQIP) is the F-box domain.

This Arabidopsis thaliana (Mouse-ear cress) protein is F-box protein At2g05970.